A 311-amino-acid polypeptide reads, in one-letter code: Putative methylthioribose-1-phosphate isomerase (311 aa).

Substrate contacts are provided by residues 46-48 (RGA), arginine 80, and glutamine 174. Aspartate 215 (proton donor) is an active-site residue. 224-225 (NK) serves as a coordination point for substrate.

This sequence belongs to the eIF-2B alpha/beta/delta subunits family. MtnA subfamily.

The enzyme catalyses 5-(methylsulfanyl)-alpha-D-ribose 1-phosphate = 5-(methylsulfanyl)-D-ribulose 1-phosphate. Functionally, catalyzes the interconversion of methylthioribose-1-phosphate (MTR-1-P) into methylthioribulose-1-phosphate (MTRu-1-P). The chain is Putative methylthioribose-1-phosphate isomerase from Methanothermobacter thermautotrophicus (strain ATCC 29096 / DSM 1053 / JCM 10044 / NBRC 100330 / Delta H) (Methanobacterium thermoautotrophicum).